Here is a 681-residue protein sequence, read N- to C-terminus: NAD(P)H-quinone oxidoreductase chain 5 (681 aa).

16 consecutive transmembrane segments (helical) span residues 7-27 (LAWL…IGLI), 39-59 (INAV…GALL), 89-109 (IDHL…LVMI), 120-140 (GYVR…GLVI), 144-164 (LVQV…LIGF), 188-208 (GLLL…FGTI), 219-239 (GVLS…GPVA), 258-278 (TPIS…FLVA), 289-309 (VVMN…ATIA), 327-347 (LGYM…FHLM), 352-372 (FKAM…GVVG), 395-415 (ATCF…AGFW), 420-440 (ILGL…ATAG), 509-529 (LTMT…GLLG), 558-578 (FYVM…VASL), and 660-680 (AQFY…VFSL).

It belongs to the complex I subunit 5 family.

The protein resides in the cell membrane. The catalysed reaction is a plastoquinone + NADH + (n+1) H(+)(in) = a plastoquinol + NAD(+) + n H(+)(out). It carries out the reaction a plastoquinone + NADPH + (n+1) H(+)(in) = a plastoquinol + NADP(+) + n H(+)(out). Its function is as follows. NDH-1 shuttles electrons from NAD(P)H, via FMN and iron-sulfur (Fe-S) centers, to quinones in the respiratory chain. The immediate electron acceptor for the enzyme in this species is believed to be plastoquinone. Couples the redox reaction to proton translocation (for every two electrons transferred, four hydrogen ions are translocated across the cytoplasmic membrane), and thus conserves the redox energy in a proton gradient. In Synechocystis sp. (strain ATCC 27184 / PCC 6803 / Kazusa), this protein is NAD(P)H-quinone oxidoreductase chain 5 (ndhF).